A 177-amino-acid polypeptide reads, in one-letter code: uncharacterized protein (177 aa).

Residues 122–177 (LPFTRNGSGQQSNKLRDPKKGRTHKPKPSEKHKKNKTGKKGAQEKTHRSRSSRKGN) are disordered. Composition is skewed to basic residues over residues 142–160 (GRTHKPKPSEKHKKNKTGK) and 168–177 (HRSRSSRKGN).

This is an uncharacterized protein from Saccharomyces cerevisiae (strain ATCC 204508 / S288c) (Baker's yeast).